A 354-amino-acid polypeptide reads, in one-letter code: Uptake hydrogenase small subunit (354 aa).

The segment at residues 1 to 44 (MSQLETXYDVMRRQGITRRSFLKYCSLTGRPCLGPTFAPQIAHA) is a signal peptide (tat-type signal). Residues cysteine 61, cysteine 64, cysteine 156, cysteine 190, histidine 228, serine 231, cysteine 256, and cysteine 262 each coordinate [4Fe-4S] cluster. [3Fe-4S] cluster-binding residues include cysteine 271, cysteine 290, and cysteine 293.

The protein belongs to the [NiFe]/[NiFeSe] hydrogenase small subunit family. In terms of assembly, heterodimer of a large and a small subunit. Requires [4Fe-4S] cluster as cofactor. It depends on [3Fe-4S] cluster as a cofactor. Predicted to be exported by the Tat system. The position of the signal peptide cleavage has not been experimentally proven.

Its subcellular location is the cell membrane. It catalyses the reaction H2 + A = AH2. In terms of biological role, this enzyme recycles the H(2) produced by nitrogenase to increase the production of ATP and to protect nitrogenase against inhibition or damage by O(2) under carbon- or phosphate-limited conditions. The polypeptide is Uptake hydrogenase small subunit (hupA) (Azotobacter chroococcum mcd 1).